A 304-amino-acid polypeptide reads, in one-letter code: MDMTGILPLAKPRGMTSHDCVAKLRRLLKTKKVGHTGTLDPDVYGVLPVCIGHATKVAQYMSDYPKAYEGEVTVGFSTTTEDRSGDTVETKTIQQPFVEAVVDQVLATFVGEIKQIPPMYSAVKVRGKRLYEYARAGITVERPERTVTIFSLERMSDIVYEEGVCRFRFNVSCSKGTYVRTLAVDIGKALGYPAHMSDLVRTKSGPFSLEECFTFTELEERLEQGEGSSLLLPIETAILDIPRVQVNKEIEEKIRHGAVLPQKWFNHPRFTVYNEEGALLAIYKAHPSKDGFVKPEKMLANDQQ.

Catalysis depends on D40, which acts as the Nucleophile.

It belongs to the pseudouridine synthase TruB family. Type 1 subfamily.

It carries out the reaction uridine(55) in tRNA = pseudouridine(55) in tRNA. In terms of biological role, responsible for synthesis of pseudouridine from uracil-55 in the psi GC loop of transfer RNAs. This chain is tRNA pseudouridine synthase B, found in Halalkalibacterium halodurans (strain ATCC BAA-125 / DSM 18197 / FERM 7344 / JCM 9153 / C-125) (Bacillus halodurans).